The primary structure comprises 391 residues: cAMP-dependent protein kinase regulatory subunit (391 aa).

Residues 1 to 84 (MFKSPFGANA…PPNPESYPAQ (84 aa)) are disordered. The segment at 1 to 131 (MFKSPFGANA…RLKTAIAGNF (131 aa)) is dimerization and phosphorylation. The span at 38 to 55 (TVTSPTSPNFGMNAQSMF) shows a compositional bias: polar residues. A Phosphoserine modification is found at S92. 3',5'-cyclic AMP-binding positions include 132–261 (LFSH…FLRE), E210, R219, 264–381 (LLQT…DIKT), E331, and R340.

The protein belongs to the cAMP-dependent kinase regulatory chain family. As to quaternary structure, tetramer, composed of 2 regulatory (R) and 2 catalytic (C) subunits. In the presence of cAMP it dissociates into 2 active monomeric C subunits and an R dimer.

In Colletotrichum orbiculare (strain 104-T / ATCC 96160 / CBS 514.97 / LARS 414 / MAFF 240422) (Cucumber anthracnose fungus), this protein is cAMP-dependent protein kinase regulatory subunit (PKAR).